A 226-amino-acid polypeptide reads, in one-letter code: Cysteine and histidine-rich domain-containing protein RAR1 (226 aa).

Residues Cys12, Cys17, Cys31, His34, Cys49, Cys50, Cys66, and His71 each contribute to the Zn(2+) site. Residues 12–71 (CQRIGCNAMFTDDDNPQGSCQFHASGPFFHDGMKEWSCCKQRSHDFSLFLEIPGCKTGKH) enclose the CHORD 1 domain. Positions 104–124 (CSRCRQGFFCSDHGSQPKEQI) match the CCCH motif. Zn(2+)-binding residues include Cys159, Cys164, Cys178, His181, Cys196, Cys197, Cys213, and His218. A CHORD 2 domain is found at 159-218 (CKNKGCGQTFKERDNHETACSHHPGPAVFHDRLRGWKCCDVHVKEFDEFMEIPPCTKGWH).

As to quaternary structure, interacts with HSP90-1, HSP90-2, SGT1A and SGT1B. Forms a ternary complex with SGT1A and barley HSP90.

Its function is as follows. Required specifically for plant innate immunity. Is essential for resistance conferred by multiple R genes recognizing different bacterial and oomycete pathogen isolates like avirulent P.syringae or H.parasitica (downy mildew). Contributes additively with SGT1B to RPP5-dependent resistance. Functions as a positive regulator of RPS5 accumulation by assisting its stabilization. May function as co-chaperone of HSP90-2 to positively regulate the steady-state accumulation of RPM1 and protect it from SGT1-mediated degradation. Acts as a negative regulator of pathogen-associated molecular pattern (PAMP)-triggered immunity. The sequence is that of Cysteine and histidine-rich domain-containing protein RAR1 (RAR1) from Arabidopsis thaliana (Mouse-ear cress).